A 379-amino-acid chain; its full sequence is uncharacterized protein (379 aa).

Disordered stretches follow at residues Met1–Thr37, Val130–Glu150, and Asn332–Arg379.

It belongs to the chlamydial CPn_0499/CT_392/TC_0671 family.

This is an uncharacterized protein from Chlamydia muridarum (strain MoPn / Nigg).